The sequence spans 103 residues: Histone H4 (103 aa).

Residue lysine 6 is modified to N6-acetyl-N6-methyllysine; alternate. N6-methyllysine; alternate occurs at positions 6, 9, and 13. The residue at position 13 (lysine 13) is an N6-acetyl-N6-methyllysine; alternate. A DNA-binding region spans residues 17-21 (KRHRK). Lysine 92 is subject to N6-glutaryllysine.

This sequence belongs to the histone H4 family. The nucleosome is a histone octamer containing two molecules each of H2A, H2B, H3 and H4 assembled in one H3-H4 heterotetramer and two H2A-H2B heterodimers. The octamer wraps approximately 147 bp of DNA. Glutarylation at Lys-92 (H4K91glu) destabilizes nucleosomes by promoting dissociation of the H2A-H2B dimers from nucleosomes.

The protein localises to the nucleus. It is found in the chromosome. Functionally, core component of nucleosome. Nucleosomes wrap and compact DNA into chromatin, limiting DNA accessibility to the cellular machineries which require DNA as a template. Histones thereby play a central role in transcription regulation, DNA repair, DNA replication and chromosomal stability. DNA accessibility is regulated via a complex set of post-translational modifications of histones, also called histone code, and nucleosome remodeling. In Mortierella alpina (Oleaginous fungus), this protein is Histone H4 (H4.1).